Consider the following 485-residue polypeptide: Glycogen synthase (485 aa).

Residue Lys-15 coordinates ADP-alpha-D-glucose.

Belongs to the glycosyltransferase 1 family. Bacterial/plant glycogen synthase subfamily.

It catalyses the reaction [(1-&gt;4)-alpha-D-glucosyl](n) + ADP-alpha-D-glucose = [(1-&gt;4)-alpha-D-glucosyl](n+1) + ADP + H(+). It functions in the pathway glycan biosynthesis; glycogen biosynthesis. In terms of biological role, synthesizes alpha-1,4-glucan chains using ADP-glucose. This Geobacillus stearothermophilus (Bacillus stearothermophilus) protein is Glycogen synthase (glgA).